Consider the following 213-residue polypeptide: Probable germin-like protein subfamily 2 member 5 (213 aa).

The N-terminal stretch at 1 to 22 is a signal peptide; that stretch reads MASFATHLVVVVTMLFVAMASA. A disulfide bridge links Cys29 with Cys44. The Cupin type-1 domain occupies 58-203; that stretch reads KGLANIAATN…SFQLKHKQVK (146 aa). Asn67 is a glycosylation site (N-linked (GlcNAc...) asparagine). Residues His106, His108, Glu113, and His152 each coordinate Mn(2+).

Belongs to the germin family. As to quaternary structure, oligomer (believed to be a pentamer but probably hexamer).

It localises to the secreted. It is found in the extracellular space. Its subcellular location is the apoplast. May play a role in plant defense. Probably has no oxalate oxidase activity even if the active site is conserved. This Arabidopsis thaliana (Mouse-ear cress) protein is Probable germin-like protein subfamily 2 member 5.